We begin with the raw amino-acid sequence, 338 residues long: 2-oxoglutarate-dependent dioxygenase ecdG (338 aa).

The Fe2OG dioxygenase domain maps to 165–273; that stretch reads PSVTNLGFLR…KYTLAYFVRP (109 aa). Positions 190, 192, and 249 each coordinate Fe cation. Lys-264 is a 2-oxoglutarate binding site.

The protein belongs to the iron/ascorbate-dependent oxidoreductase family. Fe(2+) serves as cofactor.

It participates in antifungal biosynthesis. In terms of biological role, 2-oxoglutarate-dependent dioxygenase; part of the gene cluster that mediates the biosynthesis of echinocandin B, a fungal lipidated cyclic hexapeptide that acts as an antifungal agent. Linoleoyl-AMP, produced by the fatty-acyl-AMP ligase ecdI, is transferred to the initiation carrier domain (T0) of ecdA. The linoleoyl-S-phosphopantetheinyl-T0 is sequentially extended with L-ornithine, L-threonine, L-proline, L-homotyrosine, L-threonine, and 4R-methyl-L-proline to form the linear hexapeptide. Thereafter, the terminal condensation (C7) performs macrocyclization of the NRPS product and the cyclic scaffold is released from ecdA. All six of the amino acid residues are hydroxylated, including 4R,5R-dihydroxy-L-ornithine, 4R-hydroxyl-L-proline, 3S,4S-dihydroxy-L-homotyrosine, and 3S-hydroxyl-4S-methyl-L-prolin. In the pathway, all the hydroxylation reactions are proposed to occur following completion of the cyclic peptide, so the unhydroxylated precursor produced by ecdA will undergo six rounds of hydroxylation. Five hydroxylase genes (ecdG, ecdH, ecdK, htyE and htyF) are embedded within the echinocandin B (ecd) and L-homotyrosine (hty) clusters. The sequence is that of 2-oxoglutarate-dependent dioxygenase ecdG from Aspergillus rugulosus (Emericella rugulosa).